Here is a 352-residue protein sequence, read N- to C-terminus: Galactokinase (352 aa).

14–17 (EHTD) contacts substrate. ATP is bound by residues Ser-46 and 96 to 102 (GAGLSSS). The Mg(2+) site is built by Ser-102 and Glu-134. The active-site Proton acceptor is Asp-146. Tyr-196 serves as a coordination point for substrate.

Belongs to the GHMP kinase family. GalK subfamily.

The protein localises to the cytoplasm. It catalyses the reaction alpha-D-galactose + ATP = alpha-D-galactose 1-phosphate + ADP + H(+). It participates in carbohydrate metabolism; galactose metabolism. Catalyzes the transfer of the gamma-phosphate of ATP to D-galactose to form alpha-D-galactose-1-phosphate (Gal-1-P). The protein is Galactokinase of Thermosipho africanus (strain TCF52B).